The chain runs to 150 residues: Large ribosomal subunit protein bL9 (150 aa).

This sequence belongs to the bacterial ribosomal protein bL9 family.

Functionally, binds to the 23S rRNA. The chain is Large ribosomal subunit protein bL9 from Corynebacterium aurimucosum (strain ATCC 700975 / DSM 44827 / CIP 107346 / CN-1) (Corynebacterium nigricans).